Reading from the N-terminus, the 475-residue chain is Ras-GEF domain-containing family member 1A (475 aa).

Positions 33-164 constitute an N-terminal Ras-GEF domain; that stretch reads QDGSLVSGSL…SISQMTQNVL (132 aa). In terms of domain architecture, Ras-GEF spans 208–455; that stretch reads DPLILAQQLT…FLASFENEGP (248 aa).

In terms of biological role, guanine nucleotide exchange factor (GEF) with specificity for rap2a and other Ras family proteins (in vitro). Plays a role in cell migration. The polypeptide is Ras-GEF domain-containing family member 1A (rasgef1a) (Xenopus tropicalis (Western clawed frog)).